A 79-amino-acid chain; its full sequence is Calcium/calmodulin-dependent protein kinase II inhibitor 2 (79 aa).

Positions 43–69 (KRPPKLGQIGRAKRVVIEDDRIDEVLK) are inhibitory domain.

It belongs to the CAMK2N family.

It localises to the nucleus. The protein resides in the cytoplasm. The protein localises to the cytosol. Potent and specific cellular inhibitor of CaM-kinase II (CAMK2). Traps Ca(2+)/calmodulin on CAMK2. This is Calcium/calmodulin-dependent protein kinase II inhibitor 2 (camk2n2) from Xenopus tropicalis (Western clawed frog).